Consider the following 182-residue polypeptide: Oligoribonuclease (182 aa).

In terms of domain architecture, Exonuclease spans 8-171; it reads LIWLDMEMTG…ADIHESIGEL (164 aa). Tyr129 is a catalytic residue.

It belongs to the oligoribonuclease family.

The protein resides in the cytoplasm. In terms of biological role, 3'-to-5' exoribonuclease specific for small oligoribonucleotides. The polypeptide is Oligoribonuclease (Azoarcus sp. (strain BH72)).